The primary structure comprises 506 residues: ATP synthase subunit alpha, chloroplastic (506 aa).

ATP is bound at residue 172–179 (GDRQTGKT).

It belongs to the ATPase alpha/beta chains family. In terms of assembly, F-type ATPases have 2 components, CF(1) - the catalytic core - and CF(0) - the membrane proton channel. CF(1) has five subunits: alpha(3), beta(3), gamma(1), delta(1), epsilon(1). CF(0) has four main subunits: a, b, b' and c.

It is found in the plastid. It localises to the chloroplast thylakoid membrane. The enzyme catalyses ATP + H2O + 4 H(+)(in) = ADP + phosphate + 5 H(+)(out). Produces ATP from ADP in the presence of a proton gradient across the membrane. The alpha chain is a regulatory subunit. The sequence is that of ATP synthase subunit alpha, chloroplastic from Pleurastrum terricola (Filamentous green alga).